Consider the following 546-residue polypeptide: Glucose-6-phosphate isomerase (546 aa).

Glu-353 (proton donor) is an active-site residue. Residues His-384 and Lys-512 contribute to the active site.

This sequence belongs to the GPI family.

It localises to the cytoplasm. The enzyme catalyses alpha-D-glucose 6-phosphate = beta-D-fructose 6-phosphate. It functions in the pathway carbohydrate biosynthesis; gluconeogenesis. It participates in carbohydrate degradation; glycolysis; D-glyceraldehyde 3-phosphate and glycerone phosphate from D-glucose: step 2/4. Catalyzes the reversible isomerization of glucose-6-phosphate to fructose-6-phosphate. This is Glucose-6-phosphate isomerase from Actinobacillus pleuropneumoniae serotype 3 (strain JL03).